A 386-amino-acid chain; its full sequence is MSLKDFIFTSESVGEGHPDKVCDQISDAVLDAYLEQDPKSRVACETLVTTNLVVIAGEITSKGKVDAQEIARNVIRDIGYNDITMGFDADFAVVSAHVHAQSPDISQGVTEGEGLFKEQGAGDQGLMFGFAINETPELMPMPIYYSHELVKHLAGLRHGNKLKFLRPDAKSQVTVEYKDGKPVRIDTVVISTQHSPDVTHKQIEEALIEECIKKVIPANLLNNTKYFINPTGQFIIGGPHGDAGLTGRKIIVDTYGGYGRHGGGAFSGKDPSKVDRSAAYMGRYIAKNVVASGLADKCEVQLAYAIGVAEPVSVHVDTFGTGKISEEELVKRIRANFKLTPRGIIESLKLLEKGRKYRETASYGHFGRKGSTFTWEETDKASALKG.

His17 is a binding site for ATP. A Mg(2+)-binding site is contributed by Asp19. Position 45 (Glu45) interacts with K(+). Residues Glu58 and Gln101 each coordinate L-methionine. Residues 101–111 (QSPDISQGVTE) form a flexible loop region. ATP is bound by residues 168-170 (DAK), Asp242, 248-249 (RK), Ala265, and Lys269. Asp242 serves as a coordination point for L-methionine. Position 273 (Lys273) interacts with L-methionine.

This sequence belongs to the AdoMet synthase family. In terms of assembly, homotetramer; dimer of dimers. Mg(2+) serves as cofactor. It depends on K(+) as a cofactor.

The protein localises to the cytoplasm. The catalysed reaction is L-methionine + ATP + H2O = S-adenosyl-L-methionine + phosphate + diphosphate. It participates in amino-acid biosynthesis; S-adenosyl-L-methionine biosynthesis; S-adenosyl-L-methionine from L-methionine: step 1/1. Catalyzes the formation of S-adenosylmethionine (AdoMet) from methionine and ATP. The overall synthetic reaction is composed of two sequential steps, AdoMet formation and the subsequent tripolyphosphate hydrolysis which occurs prior to release of AdoMet from the enzyme. This is S-adenosylmethionine synthase from Leptospira interrogans serogroup Icterohaemorrhagiae serovar copenhageni (strain Fiocruz L1-130).